The chain runs to 840 residues: Sorting nexin-25 (840 aa).

Residues 1-164 (MDRVLRDVFD…MLLRQLEYRE (164 aa)) enclose the PXA domain. An RGS domain is found at 287–401 (QFEDIMTNPF…LVSDLYEKLM (115 aa)). The segment at 404 to 437 (EEEEEPDAQLASEKDELGSGGEAGEEAVEGTSGV) is disordered. Residues 446 to 494 (IKLRELNEKLEYKRQALSSIQNAPKPDKKIISKLKDEILLIEKECTALQ) are a coiled coil. A PX domain is found at 508–628 (GLWRASITSA…AFLSPSPDYL (121 aa)). A Phosphoserine modification is found at S665.

The protein belongs to the sorting nexin family.

Its subcellular location is the endosome membrane. In terms of biological role, may be involved in several stages of intracellular trafficking. This chain is Sorting nexin-25 (Snx25), found in Mus musculus (Mouse).